The primary structure comprises 248 residues: Putative glutamine amidotransferase-like protein C13C5.04 (248 aa).

The Glutamine amidotransferase type-1 domain occupies 13–217 (PMVEITSAYG…VKVLRGTEVF (205 aa)).

This Schizosaccharomyces pombe (strain 972 / ATCC 24843) (Fission yeast) protein is Putative glutamine amidotransferase-like protein C13C5.04.